Here is a 182-residue protein sequence, read N- to C-terminus: Lipoprotein signal peptidase (182 aa).

3 consecutive transmembrane segments (helical) span residues 21–41 (LLLSVAATVLALDIVTKVLAV), 74–94 (GYTWVLTLIATGVVVGIFWMG), and 98–118 (VSPWWAVGLGMILGGAMGNLV). Active-site residues include Asp-134 and Asp-148. Residues 146 to 166 (VADPSVVGGAILLVVLSIFGY) form a helical membrane-spanning segment.

This sequence belongs to the peptidase A8 family.

It localises to the cell membrane. The catalysed reaction is Release of signal peptides from bacterial membrane prolipoproteins. Hydrolyzes -Xaa-Yaa-Zaa-|-(S,diacylglyceryl)Cys-, in which Xaa is hydrophobic (preferably Leu), and Yaa (Ala or Ser) and Zaa (Gly or Ala) have small, neutral side chains.. Its pathway is protein modification; lipoprotein biosynthesis (signal peptide cleavage). Its function is as follows. This protein specifically catalyzes the removal of signal peptides from prolipoproteins. The chain is Lipoprotein signal peptidase from Mycobacterium avium (strain 104).